The sequence spans 575 residues: Eukaryotic translation initiation factor 3 subunit D (575 aa).

2 disordered regions span residues 36-66 (PYSKGDKLGRMADWTEGKDRERGGRQQYGNR) and 103-177 (STRT…DASV). Residues 39–59 (KGDKLGRMADWTEGKDRERGG) show a composition bias toward basic and acidic residues. A compositionally biased stretch (gly residues) spans 109 to 144 (FGRGGGTVFGRGRGQRGGQAQRGGRGTFQRVGGRGG). Residues 163–174 (GWRDDKPQRNRD) show a composition bias toward basic and acidic residues. The interval 302–316 (NLDMVTVNENAADAP) is RNA gate.

Belongs to the eIF-3 subunit D family. As to quaternary structure, component of the eukaryotic translation initiation factor 3 (eIF-3) complex.

It is found in the cytoplasm. MRNA cap-binding component of the eukaryotic translation initiation factor 3 (eIF-3) complex, which is involved in protein synthesis of a specialized repertoire of mRNAs and, together with other initiation factors, stimulates binding of mRNA and methionyl-tRNAi to the 40S ribosome. The eIF-3 complex specifically targets and initiates translation of a subset of mRNAs involved in cell proliferation. In the eIF-3 complex, eif3d specifically recognizes and binds the 7-methylguanosine cap of a subset of mRNAs. The polypeptide is Eukaryotic translation initiation factor 3 subunit D (Phaeosphaeria nodorum (strain SN15 / ATCC MYA-4574 / FGSC 10173) (Glume blotch fungus)).